The sequence spans 145 residues: Hemoglobin subunit beta-2 (145 aa).

The region spanning 2-145 (HLTAEDRKEI…GVSHALGHGY (144 aa)) is the Globin domain. His63 and His92 together coordinate heme b.

The protein belongs to the globin family. Minor hemoglobin is a tetramer of two alpha-2 chains and two beta-2 chains. As to expression, red blood cells.

In terms of biological role, involved in oxygen transport from the lung to the various peripheral tissues. This Triturus cristatus (Great crested newt) protein is Hemoglobin subunit beta-2 (HBB2).